Reading from the N-terminus, the 345-residue chain is Anthranilate phosphoribosyltransferase (345 aa).

5-phospho-alpha-D-ribose 1-diphosphate is bound by residues 77-79 (TAG), 82-83 (GD), threonine 87, 89-92 (NVST), 106-114 (KHGNRAVSG), and serine 118. Anthranilate is bound at residue glycine 79. A Mg(2+)-binding site is contributed by serine 91. Asparagine 109 serves as a coordination point for anthranilate. Arginine 164 contributes to the anthranilate binding site. Residues aspartate 223 and glutamate 224 each coordinate Mg(2+).

It belongs to the anthranilate phosphoribosyltransferase family. As to quaternary structure, homodimer. The cofactor is Mg(2+).

The catalysed reaction is N-(5-phospho-beta-D-ribosyl)anthranilate + diphosphate = 5-phospho-alpha-D-ribose 1-diphosphate + anthranilate. The protein operates within amino-acid biosynthesis; L-tryptophan biosynthesis; L-tryptophan from chorismate: step 2/5. Catalyzes the transfer of the phosphoribosyl group of 5-phosphorylribose-1-pyrophosphate (PRPP) to anthranilate to yield N-(5'-phosphoribosyl)-anthranilate (PRA). This Saccharolobus solfataricus (strain ATCC 35092 / DSM 1617 / JCM 11322 / P2) (Sulfolobus solfataricus) protein is Anthranilate phosphoribosyltransferase.